The sequence spans 547 residues: Chaperonin GroEL (547 aa).

Residues 30–33, Lys51, 87–91, Gly415, 480–482, and Asp496 contribute to the ATP site; these read TLGP, DGTTT, and NAA. Residues 525–547 are disordered; it reads KPDDKPAMPPMGGGMGGMGGMDF. The span at 535–547 shows a compositional bias: gly residues; the sequence is MGGGMGGMGGMDF.

It belongs to the chaperonin (HSP60) family. In terms of assembly, forms a cylinder of 14 subunits composed of two heptameric rings stacked back-to-back. Interacts with the co-chaperonin GroES.

The protein localises to the cytoplasm. The enzyme catalyses ATP + H2O + a folded polypeptide = ADP + phosphate + an unfolded polypeptide.. Together with its co-chaperonin GroES, plays an essential role in assisting protein folding. The GroEL-GroES system forms a nano-cage that allows encapsulation of the non-native substrate proteins and provides a physical environment optimized to promote and accelerate protein folding. This Novosphingobium aromaticivorans (strain ATCC 700278 / DSM 12444 / CCUG 56034 / CIP 105152 / NBRC 16084 / F199) protein is Chaperonin GroEL.